Reading from the N-terminus, the 523-residue chain is GMP synthase [glutamine-hydrolyzing] (523 aa).

The Glutamine amidotransferase type-1 domain occupies 8-205 (KILILDFGSQ…VVGICGCECK (198 aa)). The Nucleophile role is filled by cysteine 85. Active-site residues include histidine 179 and glutamate 181. Residues 206-398 (WTAENIIEDA…LGLPAEMLNR (193 aa)) enclose the GMPS ATP-PPase domain. An ATP-binding site is contributed by 233 to 239 (SGGVDSS).

Homodimer.

It carries out the reaction XMP + L-glutamine + ATP + H2O = GMP + L-glutamate + AMP + diphosphate + 2 H(+). It functions in the pathway purine metabolism; GMP biosynthesis; GMP from XMP (L-Gln route): step 1/1. Its function is as follows. Catalyzes the synthesis of GMP from XMP. The sequence is that of GMP synthase [glutamine-hydrolyzing] from Actinobacillus pleuropneumoniae serotype 3 (strain JL03).